A 382-amino-acid chain; its full sequence is Dual-specificity RNA methyltransferase RlmN (382 aa).

Glutamate 96 acts as the Proton acceptor in catalysis. The Radical SAM core domain occupies 102-342; the sequence is QGKRGTLCVS…VRTTRGEDID (241 aa). A disulfide bond links cysteine 109 and cysteine 345. Residues cysteine 116, cysteine 120, and cysteine 123 each coordinate [4Fe-4S] cluster. Residues 170 to 171, serine 202, 224 to 226, and asparagine 302 each bind S-adenosyl-L-methionine; these read GE and SLH. The S-methylcysteine intermediate role is filled by cysteine 345.

It belongs to the radical SAM superfamily. RlmN family. [4Fe-4S] cluster is required as a cofactor.

The protein resides in the cytoplasm. The catalysed reaction is adenosine(2503) in 23S rRNA + 2 reduced [2Fe-2S]-[ferredoxin] + 2 S-adenosyl-L-methionine = 2-methyladenosine(2503) in 23S rRNA + 5'-deoxyadenosine + L-methionine + 2 oxidized [2Fe-2S]-[ferredoxin] + S-adenosyl-L-homocysteine. The enzyme catalyses adenosine(37) in tRNA + 2 reduced [2Fe-2S]-[ferredoxin] + 2 S-adenosyl-L-methionine = 2-methyladenosine(37) in tRNA + 5'-deoxyadenosine + L-methionine + 2 oxidized [2Fe-2S]-[ferredoxin] + S-adenosyl-L-homocysteine. Functionally, specifically methylates position 2 of adenine 2503 in 23S rRNA and position 2 of adenine 37 in tRNAs. m2A2503 modification seems to play a crucial role in the proofreading step occurring at the peptidyl transferase center and thus would serve to optimize ribosomal fidelity. The chain is Dual-specificity RNA methyltransferase RlmN from Pseudomonas fluorescens (strain ATCC BAA-477 / NRRL B-23932 / Pf-5).